A 405-amino-acid polypeptide reads, in one-letter code: Argininosuccinate synthase (405 aa).

An ATP-binding site is contributed by 11–19; sequence AYSGGLDTS. Residue Y90 participates in L-citrulline binding. ATP is bound at residue G119. 3 residues coordinate L-aspartate: T121, N125, and D126. L-citrulline is bound at residue N125. Residues R129, S178, S187, E263, and Y275 each coordinate L-citrulline.

It belongs to the argininosuccinate synthase family. Type 1 subfamily. Homotetramer.

The protein resides in the cytoplasm. The enzyme catalyses L-citrulline + L-aspartate + ATP = 2-(N(omega)-L-arginino)succinate + AMP + diphosphate + H(+). It participates in amino-acid biosynthesis; L-arginine biosynthesis; L-arginine from L-ornithine and carbamoyl phosphate: step 2/3. This is Argininosuccinate synthase from Legionella pneumophila (strain Corby).